A 179-amino-acid chain; its full sequence is Large ribosomal subunit protein uL5 (179 aa).

This sequence belongs to the universal ribosomal protein uL5 family. Part of the 50S ribosomal subunit; part of the 5S rRNA/L5/L18/L25 subcomplex. Contacts the 5S rRNA and the P site tRNA. Forms a bridge to the 30S subunit in the 70S ribosome.

This is one of the proteins that bind and probably mediate the attachment of the 5S RNA into the large ribosomal subunit, where it forms part of the central protuberance. In the 70S ribosome it contacts protein S13 of the 30S subunit (bridge B1b), connecting the 2 subunits; this bridge is implicated in subunit movement. Contacts the P site tRNA; the 5S rRNA and some of its associated proteins might help stabilize positioning of ribosome-bound tRNAs. The protein is Large ribosomal subunit protein uL5 of Dechloromonas aromatica (strain RCB).